The sequence spans 336 residues: Sulfate/thiosulfate import ATP-binding protein CysA (336 aa).

An ABC transporter domain is found at 3-233 (ITIENVSKSF…PASPFVMSFI (231 aa)). 35–42 (GPSGSGKS) is an ATP binding site.

Belongs to the ABC transporter superfamily. Sulfate/tungstate importer (TC 3.A.1.6) family. In terms of assembly, the complex is composed of two ATP-binding proteins (CysA), two transmembrane proteins (CysT and CysW) and a solute-binding protein (CysP).

It is found in the cell inner membrane. The catalysed reaction is sulfate(out) + ATP + H2O = sulfate(in) + ADP + phosphate + H(+). It carries out the reaction thiosulfate(out) + ATP + H2O = thiosulfate(in) + ADP + phosphate + H(+). Part of the ABC transporter complex CysAWTP involved in sulfate/thiosulfate import. Responsible for energy coupling to the transport system. This is Sulfate/thiosulfate import ATP-binding protein CysA from Thermosynechococcus vestitus (strain NIES-2133 / IAM M-273 / BP-1).